The sequence spans 211 residues: Redox-sensing transcriptional repressor Rex (211 aa).

A DNA-binding region (H-T-H motif) is located at residues 17 to 56; sequence KYHRYLEELLRNEVDRISSKELSKKIGFTASQIRQDFNCF. 91-96 is a binding site for NAD(+); that stretch reads GGGNIG.

This sequence belongs to the transcriptional regulatory Rex family. Homodimer.

It localises to the cytoplasm. Functionally, modulates transcription in response to changes in cellular NADH/NAD(+) redox state. The chain is Redox-sensing transcriptional repressor Rex from Clostridium tetani (strain Massachusetts / E88).